Reading from the N-terminus, the 131-residue chain is Glycine cleavage system H protein (131 aa).

Positions 24–106 constitute a Lipoyl-binding domain; it reads TVRIGITDYA…YGEGWLVDLE (83 aa). At K65 the chain carries N6-lipoyllysine.

Belongs to the GcvH family. In terms of assembly, the glycine cleavage system is composed of four proteins: P, T, L and H. Requires (R)-lipoate as cofactor.

Functionally, the glycine cleavage system catalyzes the degradation of glycine. The H protein shuttles the methylamine group of glycine from the P protein to the T protein. In Mycobacteroides abscessus (strain ATCC 19977 / DSM 44196 / CCUG 20993 / CIP 104536 / JCM 13569 / NCTC 13031 / TMC 1543 / L948) (Mycobacterium abscessus), this protein is Glycine cleavage system H protein.